We begin with the raw amino-acid sequence, 96 residues long: Co-chaperonin GroES (96 aa).

This sequence belongs to the GroES chaperonin family. As to quaternary structure, heptamer of 7 subunits arranged in a ring. Interacts with the chaperonin GroEL.

The protein resides in the cytoplasm. Functionally, together with the chaperonin GroEL, plays an essential role in assisting protein folding. The GroEL-GroES system forms a nano-cage that allows encapsulation of the non-native substrate proteins and provides a physical environment optimized to promote and accelerate protein folding. GroES binds to the apical surface of the GroEL ring, thereby capping the opening of the GroEL channel. This chain is Co-chaperonin GroES, found in Wolbachia pipientis wMel.